A 74-amino-acid chain; its full sequence is Translation initiation factor IF-1, chloroplastic (74 aa).

Residues 1-72 (MERQNLIEME…TKGRITYRLR (72 aa)) enclose the S1-like domain.

The protein belongs to the IF-1 family. Component of the 30S ribosomal translation pre-initiation complex which assembles on the 30S ribosome in the order IF-2 and IF-3, IF-1 and N-formylmethionyl-tRNA(fMet); mRNA recruitment can occur at any time during PIC assembly.

It is found in the plastid. Its subcellular location is the chloroplast. Functionally, one of the essential components for the initiation of protein synthesis. Stabilizes the binding of IF-2 and IF-3 on the 30S subunit to which N-formylmethionyl-tRNA(fMet) subsequently binds. Helps modulate mRNA selection, yielding the 30S pre-initiation complex (PIC). Upon addition of the 50S ribosomal subunit IF-1, IF-2 and IF-3 are released leaving the mature 70S translation initiation complex. The polypeptide is Translation initiation factor IF-1, chloroplastic (Mesostigma viride (Green alga)).